We begin with the raw amino-acid sequence, 177 residues long: Small ribosomal subunit protein uS4 (177 aa).

Residues 104 to 168 (RRLQTLVFRK…SPMASESHPE (65 aa)) enclose the S4 RNA-binding domain. Positions 157–177 (PNSPMASESHPERTDSVKDAE) are disordered. The segment covering 165-177 (SHPERTDSVKDAE) has biased composition (basic and acidic residues).

The protein belongs to the universal ribosomal protein uS4 family. As to quaternary structure, part of the 30S ribosomal subunit. Contacts protein S5. The interaction surface between S4 and S5 is involved in control of translational fidelity.

Functionally, one of the primary rRNA binding proteins, it binds directly to 16S rRNA where it nucleates assembly of the body of the 30S subunit. Its function is as follows. With S5 and S12 plays an important role in translational accuracy. This chain is Small ribosomal subunit protein uS4, found in Methanococcus aeolicus (strain ATCC BAA-1280 / DSM 17508 / OCM 812 / Nankai-3).